Here is a 105-residue protein sequence, read N- to C-terminus: Ig lambda chain C region (105 aa).

One can recognise an Ig-like domain in the interval 2–100; sequence PKAAPTVNLF…EGTIVEKTVT (99 aa). Cysteines 27 and 86 form a disulfide.

This Sus scrofa (Pig) protein is Ig lambda chain C region.